Consider the following 192-residue polypeptide: Small ribosomal subunit protein eS7 (192 aa).

The protein belongs to the eukaryotic ribosomal protein eS7 family.

This chain is Small ribosomal subunit protein eS7 (RPS7), found in Secale cereale (Rye).